The chain runs to 1453 residues: Collagen alpha-1(I) chain (1453 aa).

A signal peptide spans 1-22 (MFSFVDSRLLLLIAATVLLTRG). The propeptide at 23–151 (EGEEDIQTGS…PPGLGGNFAP (129 aa)) is N-terminal propeptide. Positions 31–89 (GSCVQDGLTYNDKDVWKPEPCQICVCDSGNILCDEVICEDTSDCPNAEIPFGECCPICP) constitute a VWFC domain. Residues 98-1203 (PESAGVEGPK…PQEKAHDGGR (1106 aa)) form a disordered region. Over residues 106–116 (PKGDTGPRGDR) the composition is skewed to basic and acidic residues. A compositionally biased stretch (pro residues) spans 131 to 143 (PGLPGPPGPPGPP). Residue Gln152 is modified to Pyrrolidone carboxylic acid. Lys160 is modified (allysine). The span at 162-176 (AGVAVPGPMGPAGPR) shows a compositional bias: low complexity. A 4-hydroxyproline mark is found at Pro179, Pro182, Pro185, Pro194, Pro197, Pro200, Pro215, Pro230, Pro236, Pro245, and Pro251. The segment covering 187–206 (PQGFQGPPGEPGEPGASGPM) has biased composition (low complexity). Position 254 is a 5-hydroxylysine; alternate (Lys254). O-linked (Gal...) hydroxylysine; partial glycosylation is present at Lys254. Positions 265–284 (AKGQPGPAGPKGEPGSPGEN) are enriched in low complexity. 4-hydroxyproline is present on residues Pro269, Pro278, Pro281, Pro287, Pro296, Pro302, Pro317, Pro323, Pro332, and Pro335. Positions 307–319 (PAGARGNDGAPGA) are enriched in low complexity. Positions 320-334 (AGPPGPTGPAGPPGF) are enriched in pro residues. Low complexity predominate over residues 350–361 (RGSEGPQGSRGE). 8 positions are modified to 4-hydroxyproline: Pro362, Pro365, Pro377, Pro383, Pro392, Pro398, Pro401, and Pro416. The segment covering 368–418 (AGAAGPAGNPGADGQPGAKGATGAPGIAGAPGFPGARGPSGPQGPSGAPGP) has biased composition (low complexity). Position 419 is a 5-hydroxylysine (Lys419). Residues Pro425, Pro428, Pro440, Pro449, Pro464, Pro470, Pro479, and Pro485 each carry the 4-hydroxyproline modification. Over residues 463–482 (EPGPAGLPGPAGERGAPGSR) the composition is skewed to low complexity. At Lys494 the chain carries 5-hydroxylysine. Residues Pro497, Pro503, Pro512, Pro518, Pro524, Pro533, Pro536, Pro545, Pro554, Pro560, Pro572, Pro581, Pro584, Pro590, Pro593, Pro611, Pro629, Pro635, Pro641, Pro647, Pro653, Pro659, Pro671, Pro680, Pro692, Pro704, Pro707, Pro713, Pro719, Pro728, and Pro737 each carry the 4-hydroxyproline modification. The segment covering 527–581 (KGLTGSPGSPGPDGKTGPPGPAGQDGRPGPAGPPGARGQAGVMGFPGPKGAAGEP) has biased composition (low complexity). A compositionally biased stretch (low complexity) spans 623 to 664 (QGPAGAPGFQGLPGPAGPPGEAGKPGEQGVPGNAGAPGPAGA). Positions 685-722 (PRGANGAPGNDGAKGDAGAPGAPGNEGPPGLEGMPGER) are enriched in low complexity. At Lys740 the chain carries 5-hydroxylysine. 4-hydroxyproline is present on residues Pro746, Pro761, Pro767, Pro776, Pro788, Pro794, Pro797, Pro806, Pro812, Pro830, Pro839, and Pro848. Residues 800 to 827 (AGFAGPPGADGQPGAKGETGDAGAKGDA) are compositionally biased toward low complexity. Over residues 835–883 (PTGAPGPAGZVGAPGPKGARGSAGPPGATGFPGAAGRVGPPGPSGNIGL) the composition is skewed to low complexity. Lys851 is subject to 5-hydroxylysine. Pro860 and Pro866 each carry 4-hydroxyproline. Pro874 is subject to 3-hydroxyproline. 4-hydroxyproline occurs at positions 875, 884, 887, 908, 911, 917, 920, 926, 935, 953, 962, 965, 971, 986, 992, 998, 1007, and 1013. Low complexity predominate over residues 890-908 (AGKZGSKGPRGETGPAGRP). The segment covering 910–920 (EPGPAGPPGPP) has biased composition (pro residues). The segment covering 985–995 (PPGPMGPPGLA) has biased composition (pro residues). Over residues 997–1021 (PPGEAGREGAPGAEGAPGRDGAAGP) the composition is skewed to low complexity. 5-hydroxylysine; partial is present on Lys1022. The segment covering 1031–1046 (AGPPGAPGAPGAPGPV) has biased composition (pro residues). 4-hydroxyproline is present on residues Pro1034, Pro1037, Pro1040, and Pro1067. A compositionally biased stretch (low complexity) spans 1070-1081 (AGARGPAGPQGP). Residues 1082 to 1096 (RGDKGETGEQGDRGM) are compositionally biased toward basic and acidic residues. Position 1085 is a 5-hydroxylysine; partial (Lys1085). At Lys1097 the chain carries 5-hydroxylysine; alternate. Lys1097 carries O-linked (Gal...) hydroxylysine; partial glycosylation. Residues Pro1109, Pro1112, Pro1115, Pro1133, and Pro1148 each carry the 4-hydroxyproline modification. The segment covering 1115-1139 (PGEQGPSGASGPAGPRGPPGSAGAA) has biased composition (low complexity). Pro1153 carries the post-translational modification 3-hydroxyproline. Pro1154 carries the 4-hydroxyproline modification. Residues 1166–1181 (VGPPGPPGPPGPPGPP) show a composition bias toward pro residues. Pro1168 carries the post-translational modification 3-hydroxyproline. Pro1169 is modified (4-hydroxyproline). Pro1171 bears the 3-hydroxyproline mark. Pro1172 carries the post-translational modification 4-hydroxyproline. Pro1174 is modified (3-hydroxyproline). A 4-hydroxyproline mark is found at Pro1175, Pro1178, and Pro1181. Position 1197 is an allysine (Lys1197). The propeptide at 1208–1453 (DDANVMRDRD…GIDIGPVCFL (246 aa)) is C-terminal propeptide. The 236-residue stretch at 1218–1453 (LEVDTTLKSL…GIDIGPVCFL (236 aa)) folds into the Fibrillar collagen NC1 domain. Cystine bridges form between Cys1248-Cys1280, Cys1288-Cys1451, and Cys1359-Cys1404. Ca(2+)-binding residues include Asp1266, Asn1268, Gln1269, Cys1271, and Asp1274. N-linked (GlcNAc...) asparagine glycosylation occurs at Asn1354.

The protein belongs to the fibrillar collagen family. In terms of assembly, trimers of one alpha 2(I) and two alpha 1(I) chains. Contains mostly 4-hydroxyproline. Proline residues at the third position of the tripeptide repeating unit (G-X-Y) are 4-hydroxylated in some or all of the chains. In terms of processing, contains 3-hydroxyproline. This modification occurs on the first proline residue in the sequence motif Gly-Pro-Hyp, where Hyp is 4-hydroxyproline. Post-translationally, lysine residues at the third position of the tripeptide repeating unit (G-X-Y) are 5-hydroxylated in some or all of the chains. O-glycosylated on hydroxylated lysine residues. The O-linked glycan consists of a Glc-Gal disaccharide. In terms of tissue distribution, forms the fibrils of tendon, ligaments and bones. In bones the fibrils are mineralized with calcium hydroxyapatite.

It is found in the secreted. The protein resides in the extracellular space. The protein localises to the extracellular matrix. Its function is as follows. Type I collagen is a member of group I collagen (fibrillar forming collagen). This chain is Collagen alpha-1(I) chain (COL1A1), found in Gallus gallus (Chicken).